The primary structure comprises 412 residues: Dihydrolipoyllysine-residue acetyltransferase component of pyruvate dehydrogenase complex (412 aa).

Positions 2–78 (PIKILMPVLS…PVNSLIAVLS (77 aa)) constitute a Lipoyl-binding domain. Lys-43 is subject to N6-lipoyllysine. One can recognise a Peripheral subunit-binding (PSBD) domain in the interval 132-169 (FASPLAKRLAKMGNIRLESVKGSGPHGRIVKQDILSYT). The active site involves His-385.

The protein belongs to the 2-oxoacid dehydrogenase family. In terms of assembly, forms a 24-polypeptide structural core with octahedral symmetry. Requires (R)-lipoate as cofactor.

The enzyme catalyses N(6)-[(R)-dihydrolipoyl]-L-lysyl-[protein] + acetyl-CoA = N(6)-[(R)-S(8)-acetyldihydrolipoyl]-L-lysyl-[protein] + CoA. The pyruvate dehydrogenase complex catalyzes the overall conversion of pyruvate to acetyl-CoA and CO(2). It contains multiple copies of three enzymatic components: pyruvate dehydrogenase (E1), dihydrolipoamide acetyltransferase (E2) and lipoamide dehydrogenase (E3). This is Dihydrolipoyllysine-residue acetyltransferase component of pyruvate dehydrogenase complex (pdhC) from Rickettsia felis (strain ATCC VR-1525 / URRWXCal2) (Rickettsia azadi).